The following is a 95-amino-acid chain: Putative small ubiquitin-related modifier 7 (95 aa).

Residues 13-90 (SHITIKIKSQ…IDAFVDQIAG (78 aa)) form the Ubiquitin-like domain. A Glycyl lysine isopeptide (Gly-Lys) (interchain with K-? in acceptor proteins) cross-link involves residue Gly-90.

The protein belongs to the ubiquitin family. SUMO subfamily. In terms of assembly, interacts with SAE2, SCE1, SIZ1 and MMS21 Covalently attached to a number of proteins.

The protein localises to the nucleus. Its subcellular location is the cytoplasm. Functionally, ubiquitin-like protein which can be covalently attached to target lysines as a monomer. Does not seem to be involved in protein degradation and may function as an antagonist of ubiquitin in the degradation process. The chain is Putative small ubiquitin-related modifier 7 (SUMO7) from Arabidopsis thaliana (Mouse-ear cress).